The primary structure comprises 1363 residues: Spike glycoprotein (1363 aa).

An N-terminal signal peptide occupies residues 1-13 (MFLILLISLPMAL). At 14-1307 (AVIGDLKCTT…GTYEYYVKWP (1294 aa)) the chain is on the extracellular side. In terms of domain architecture, BetaCoV S1-NTD spans 15–298 (VIGDLKCTTV…DFMSEIKCKT (284 aa)). 5 disulfides stabilise this stretch: cysteine 21-cysteine 165, cysteine 160-cysteine 193, cysteine 172-cysteine 252, cysteine 286-cysteine 296, and cysteine 331-cysteine 356. N-linked (GlcNAc...) asparagine; by host glycans are attached at residues asparagine 59 and asparagine 133. N-linked (GlcNAc...) asparagine; by host glycosylation is present at asparagine 198. In terms of domain architecture, BetaCoV S1-CTD spans 329–617 (PDCNIEAWLN…DVNSGTTCST (289 aa)). A glycan (N-linked (GlcNAc...) asparagine; by host) is linked at asparagine 359. Cystine bridges form between cysteine 374–cysteine 427 and cysteine 386–cysteine 615. Asparagine 437, asparagine 649, asparagine 676, asparagine 696, asparagine 714, asparagine 739, and asparagine 788 each carry an N-linked (GlcNAc...) asparagine; by host glycan. Fusion peptide regions lie at residues 914–935 (SAIE…VEAY) and 933–953 (EAYN…VQSY). Asparagine 937 carries an N-linked (GlcNAc...) asparagine; by host glycan. Cysteine 938 and cysteine 949 form a disulfide bridge. Residues 1014 to 1064 (QKLIANAFNNALDAIQEGFDATNSALVKIQAVVNANAEALNNLLQQLSNRF) form a heptad repeat 1 region. Positions 1043–1087 (QAVVNANAEALNNLLQQLSNRFGAISSSLQEILSRLDALEAQAQI) form a coiled coil. N-linked (GlcNAc...) asparagine; by host glycans are attached at residues asparagine 1194, asparagine 1224, asparagine 1234, asparagine 1253, asparagine 1267, and asparagine 1288. The tract at residues 1258–1296 (APDLSLDYINVTFLDLQDEMNRLQEAIKVLNQSYINLKD) is heptad repeat 2. Residues 1269–1297 (TFLDLQDEMNRLQEAIKVLNQSYINLKDI) adopt a coiled-coil conformation. A helical transmembrane segment spans residues 1308 to 1328 (WYVWLLIGLAGVAMLVLLFFI). The Cytoplasmic portion of the chain corresponds to 1329–1363 (CCCTGCGTSCFKKCGGCCDDYTGHQELVIKTSHDD). A KxHxx motif is present at residues 1359–1363 (TSHDD).

It belongs to the betacoronaviruses spike protein family. As to quaternary structure, homotrimer; each monomer consists of a S1 and a S2 subunit. The resulting peplomers protrude from the virus surface as spikes. Specific enzymatic cleavages in vivo yield mature proteins. The precursor is processed into S1 and S2 by host cell furin or another cellular protease to yield the mature S1 and S2 proteins. Additionally, a second cleavage leads to the release of a fusion peptide after viral attachment to host cell receptor. Post-translationally, the cytoplasmic Cys-rich domain is palmitoylated. Spike glycoprotein is digested within host endosomes.

It localises to the virion membrane. The protein localises to the host endoplasmic reticulum-Golgi intermediate compartment membrane. It is found in the host cell membrane. Attaches the virion to the cell membrane by interacting with host receptor, initiating the infection. Its function is as follows. Mediates fusion of the virion and cellular membranes by acting as a class I viral fusion protein. Under the current model, the protein has at least three conformational states: pre-fusion native state, pre-hairpin intermediate state, and post-fusion hairpin state. During viral and target cell membrane fusion, the coiled coil regions (heptad repeats) assume a trimer-of-hairpins structure, positioning the fusion peptide in close proximity to the C-terminal region of the ectodomain. The formation of this structure appears to drive apposition and subsequent fusion of viral and target cell membranes. Functionally, acts as a viral fusion peptide which is unmasked following S2 cleavage occurring upon virus endocytosis. The sequence is that of Spike glycoprotein from Bos taurus (Bovine).